The chain runs to 414 residues: Probable cell wall biosynthesis protein LcpB (414 aa).

The segment at 1–108 (MDSPGQGEIA…PPVIAGDGGR (108 aa)) is disordered. The Cytoplasmic segment spans residues 1–120 (MDSPGQGEIA…KAISFKPRGC (120 aa)). Positions 9–23 (IARDSQGRPILDRYG) are enriched in basic and acidic residues. The segment covering 33–42 (RQTPPTPRTP) has biased composition (pro residues). The segment covering 43 to 53 (PVNETRVYQPR) has biased composition (low complexity). The segment covering 54–80 (QTPPRQTPPRQTPPRQMPPRQTPPRQV) has biased composition (pro residues). The helical transmembrane segment at 121-141 (LGTIAGVLAVGLVLVFVVTLW) threads the bilayer. Residues 142 to 414 (ADSKLNRVDA…GAEALFSSMR (273 aa)) are Periplasmic-facing.

The protein belongs to the LytR/CpsA/Psr (LCP) family.

The protein resides in the cell inner membrane. The polypeptide is Probable cell wall biosynthesis protein LcpB (Corynebacterium glutamicum (strain ATCC 13032 / DSM 20300 / JCM 1318 / BCRC 11384 / CCUG 27702 / LMG 3730 / NBRC 12168 / NCIMB 10025 / NRRL B-2784 / 534)).